A 318-amino-acid polypeptide reads, in one-letter code: Olfactory receptor 5G25 (318 aa).

Residues 1–25 (MMHRNQTVVTEFFFTGLTSSFHLQI) lie on the Extracellular side of the membrane. N-linked (GlcNAc...) asparagine glycosylation is present at asparagine 5. Residues 26-46 (VLFLTFLCVYLATLLGNLGMI) form a helical membrane-spanning segment. Topologically, residues 47–54 (ILIHQDTR) are cytoplasmic. A helical transmembrane segment spans residues 55-75 (LHIPMYFFLSHLSFVDACSSS). At 76 to 99 (VISPKMLSDIFVDKKVISFLGCAI) the chain is on the extracellular side. A disulfide bridge links cysteine 97 with cysteine 189. Residues 100-120 (QFCLFSQFVVTECFLLASMAY) traverse the membrane as a helical segment. At 121 to 133 (DRYVAICKPLLYT) the chain is on the cytoplasmic side. A helical transmembrane segment spans residues 134–154 (LIMSQRVCVQLVIGPYSIGLI). Residues 155 to 196 (STVVHTTSAFILPYCGPNLINHFFCDLLPVLSLACADTQMNK) lie on the Extracellular side of the membrane. Residues 197–217 (HLLFIMAGILGVFSGIIILVS) traverse the membrane as a helical segment. Topologically, residues 218 to 237 (YVYIAITILKINSADGRRKA) are cytoplasmic. A helical membrane pass occupies residues 238 to 258 (FSTCSSHLTAVSILYGTLFFI). The Extracellular portion of the chain corresponds to 259 to 271 (YVRPSSSFSLDIN). The chain crosses the membrane as a helical span at residues 272–292 (KVVSLFYTAVIPMLNPFIYSL). At 293–318 (RNKEVKDALIRTFEKKFCYSLQDKIL) the chain is on the cytoplasmic side.

It belongs to the G-protein coupled receptor 1 family.

It localises to the cell membrane. In terms of biological role, potential odorant receptor. This chain is Olfactory receptor 5G25, found in Mus musculus (Mouse).